Consider the following 457-residue polypeptide: Putative ankyrin repeat protein L112 (457 aa).

ANK repeat units lie at residues 62-91, 104-132, 133-162, 193-219, 220-249, 251-279, 281-309, 310-339, 341-368, 400-429, and 431-457; these read QRIT…NHNP, SKDT…ASIN, SSSL…EIIN, YINE…LDCS, ITVD…DPRK, KCWA…KPKE, NVDA…DTIT, RRDW…SQKS, NKAL…DFRQ, NNNE…DYNP, and KDQL…DTLK.

The chain is Putative ankyrin repeat protein L112 from Acanthamoeba polyphaga mimivirus (APMV).